Here is a 409-residue protein sequence, read N- to C-terminus: Phosphoglycerate kinase (409 aa).

Residues 23-25 (DIN), 63-66 (HQSR), Arg-120, and Arg-160 each bind substrate. ATP contacts are provided by residues Glu-333 and 359-362 (GGHL).

It belongs to the phosphoglycerate kinase family. As to quaternary structure, monomer.

The protein resides in the cytoplasm. It catalyses the reaction (2R)-3-phosphoglycerate + ATP = (2R)-3-phospho-glyceroyl phosphate + ADP. The protein operates within carbohydrate degradation; glycolysis; pyruvate from D-glyceraldehyde 3-phosphate: step 2/5. The protein is Phosphoglycerate kinase (pgk) of Methanobacterium bryantii.